We begin with the raw amino-acid sequence, 422 residues long: Probable protease eep (422 aa).

H18 provides a ligand contact to Zn(2+). E19 is an active-site residue. Residue H22 coordinates Zn(2+). Helical transmembrane passes span 176–196 (FAGPMNNFILGFILFTLAVFL), 349–369 (VVFLMAMLSMNLGIINLLPIP), and 394–414 (EGIITLIGFGFVMVLMVLVTW). The region spanning 179 to 273 (PMNNFILGFI…EEQLTVTPEK (95 aa)) is the PDZ domain.

It belongs to the peptidase M50B family. It depends on Zn(2+) as a cofactor.

It localises to the cell membrane. Involved in production of the peptide pheromone cAD1. The polypeptide is Probable protease eep (eep) (Enterococcus faecalis (strain ATCC 700802 / V583)).